The following is a 173-amino-acid chain: Large ribosomal subunit protein uL14mz (173 aa).

The N-terminal 61 residues, M1–G61, are a transit peptide targeting the mitochondrion.

This sequence belongs to the universal ribosomal protein uL14 family. Part of the mitochondrial 50S ribosomal subunit. In terms of tissue distribution, mostly expressed in leaves and inflorescences, including floral organs and meristems, and, to a lower extent, in pistils.

The protein localises to the mitochondrion. Its function is as follows. Binds to 23S rRNA in mitochondrion. This is Large ribosomal subunit protein uL14mz (HLP) from Arabidopsis thaliana (Mouse-ear cress).